The sequence spans 1400 residues: DNA-directed RNA polymerase subunit beta' (1400 aa).

Positions 71, 73, 86, and 89 each coordinate Zn(2+). Positions 462, 464, and 466 each coordinate Mg(2+). 4 residues coordinate Zn(2+): Cys-820, Cys-893, Cys-900, and Cys-903.

Belongs to the RNA polymerase beta' chain family. As to quaternary structure, the RNAP catalytic core consists of 2 alpha, 1 beta, 1 beta' and 1 omega subunit. When a sigma factor is associated with the core the holoenzyme is formed, which can initiate transcription. It depends on Mg(2+) as a cofactor. Requires Zn(2+) as cofactor.

It catalyses the reaction RNA(n) + a ribonucleoside 5'-triphosphate = RNA(n+1) + diphosphate. DNA-dependent RNA polymerase catalyzes the transcription of DNA into RNA using the four ribonucleoside triphosphates as substrates. This Methylobacterium nodulans (strain LMG 21967 / CNCM I-2342 / ORS 2060) protein is DNA-directed RNA polymerase subunit beta'.